The primary structure comprises 365 residues: Peptide chain release factor 2 (365 aa).

Glutamine 251 bears the N5-methylglutamine mark.

The protein belongs to the prokaryotic/mitochondrial release factor family. In terms of processing, methylated by PrmC. Methylation increases the termination efficiency of RF2.

Its subcellular location is the cytoplasm. Functionally, peptide chain release factor 2 directs the termination of translation in response to the peptide chain termination codons UGA and UAA. The chain is Peptide chain release factor 2 from Campylobacter jejuni (strain RM1221).